The following is a 234-amino-acid chain: Isoprenyl transferase (234 aa).

Residue Asp13 is part of the active site. Asp13 provides a ligand contact to Mg(2+). Residues Gly14–Arg17, Trp18, Arg26, His30, and Ser58–Glu60 contribute to the substrate site. Catalysis depends on Asn61, which acts as the Proton acceptor. Substrate is bound by residues Trp62, Arg64, Arg180, and Arg186–Ser188. A Mg(2+)-binding site is contributed by Glu199.

Belongs to the UPP synthase family. In terms of assembly, homodimer. The cofactor is Mg(2+).

Catalyzes the condensation of isopentenyl diphosphate (IPP) with allylic pyrophosphates generating different type of terpenoids. This chain is Isoprenyl transferase, found in Helicobacter pylori (strain J99 / ATCC 700824) (Campylobacter pylori J99).